The chain runs to 185 residues: Ribosome-recycling factor (185 aa).

Belongs to the RRF family.

The protein localises to the cytoplasm. Its function is as follows. Responsible for the release of ribosomes from messenger RNA at the termination of protein biosynthesis. May increase the efficiency of translation by recycling ribosomes from one round of translation to another. This is Ribosome-recycling factor from Roseiflexus castenholzii (strain DSM 13941 / HLO8).